The chain runs to 178 residues: N-alpha-acetyltransferase 20 (178 aa).

The N-acetyltransferase domain occupies 2–157 (TTLRAFTCDD…DAYDMRKALS (156 aa)).

Belongs to the acetyltransferase family. ARD1 subfamily. Component of the N-terminal acetyltransferase B (NatB) complex which is composed of naa20 and naa25.

The protein resides in the cytoplasm. The protein localises to the nucleus. It carries out the reaction N-terminal L-methionyl-L-asparaginyl-[protein] + acetyl-CoA = N-terminal N(alpha)-acetyl-L-methionyl-L-asparaginyl-[protein] + CoA + H(+). The enzyme catalyses N-terminal L-methionyl-L-glutaminyl-[protein] + acetyl-CoA = N-terminal N(alpha)-acetyl-L-methionyl-L-glutaminyl-[protein] + CoA + H(+). It catalyses the reaction N-terminal L-methionyl-L-aspartyl-[protein] + acetyl-CoA = N-terminal N(alpha)-acetyl-L-methionyl-L-aspartyl-[protein] + CoA + H(+). The catalysed reaction is N-terminal L-methionyl-L-glutamyl-[protein] + acetyl-CoA = N-terminal N(alpha)-acetyl-L-methionyl-L-glutamyl-[protein] + CoA + H(+). Catalytic subunit of the NatB complex which catalyzes acetylation of the N-terminal methionine residues of peptides beginning with Met-Asp, Met-Glu, Met-Asn and Met-Gln. Proteins with cell cycle functions are overrepresented in the pool of NatB substrates. Required for maintaining the structure and function of actomyosin fibers and for proper cellular migration. The sequence is that of N-alpha-acetyltransferase 20 (naa20) from Danio rerio (Zebrafish).